Consider the following 62-residue polypeptide: Alpha-elapitoxin-Nn2a (62 aa).

The segment at 1–20 (LECHNQQSSQTPTTTDCSGG) is disordered. Intrachain disulfides connect Cys3–Cys24, Cys17–Cys41, Cys43–Cys54, and Cys55–Cys60.

This sequence belongs to the three-finger toxin family. Short-chain subfamily. Type I alpha-neurotoxin sub-subfamily. In terms of tissue distribution, expressed by the venom gland.

Its subcellular location is the secreted. In terms of biological role, nicotinic acetylcholine receptor antagonist. Binds to muscle nicotinic acetylcholine receptor (nAChR) and inhibits acetylcholine from binding to the receptor, thereby impairing neuromuscular transmission. Produces peripheral paralysis by blocking neuromuscular transmission at the postsynaptic site. Induces concentration-dependent inhibition of indirect twitches and abolishes contractile responses of tissues to exogenous acetylcholine and carbachol, in the chick biventer cervicis nerve-muscle preparation at 100-300 nM (in vitro). Prior incubation of tissues with Indian polyvalent antivenom (1 ml/0.6 mg) prevents the neurotoxic effects at 100 nM (in vitro). Addition of Indian polyvalent antivenom (1 ml/0.6 mg) at the t90 time point does not reverse the neurotoxic effects (in vitro). Displays non-competitive antagonism of concentration-response curves to carbachol, with a pA2 of 8.01 (in vitro). The chain is Alpha-elapitoxin-Nn2a from Naja naja (Indian cobra).